A 314-amino-acid polypeptide reads, in one-letter code: Mitotic checkpoint protein BUB3.3 (314 aa).

WD repeat units follow at residues 11–50 (PIED…LSLE), 52–90 (NSQA…VDTI), 92–131 (RHDD…SLVF), 134–173 (DAGG…QSYA), 176–215 (VEVP…SEIK), 229–269 (LDGV…RLNE), and 272–311 (RYSN…QVFI).

This sequence belongs to the WD repeat BUB3 family. Part of the mitotic checkpoint complex (MCC).

It is found in the nucleus. The protein resides in the chromosome. The protein localises to the centromere. Its subcellular location is the kinetochore. It localises to the cytoplasm. It is found in the cytoskeleton. The protein resides in the phragmoplast. The protein localises to the spindle. Has a dual function in spindle-assembly checkpoint signaling and in promoting the establishment of correct kinetochore-microtubule (K-MT) attachments. Promotes the formation of stable end-on bipolar attachments. Necessary for kinetochore localization of BUB1. The BUB1/BUB3 complex plays a role in the inhibition of anaphase-promoting complex or cyclosome (APC/C) when spindle-assembly checkpoint is activated and inhibits the ubiquitin ligase activity of APC/C by phosphorylating its activator CDC20. This is Mitotic checkpoint protein BUB3.3 (BUB3.3) from Arabidopsis thaliana (Mouse-ear cress).